The primary structure comprises 162 residues: Endoribonuclease YbeY (162 aa).

Residues H118, H122, and H128 each contribute to the Zn(2+) site.

Belongs to the endoribonuclease YbeY family. The cofactor is Zn(2+).

Its subcellular location is the cytoplasm. In terms of biological role, single strand-specific metallo-endoribonuclease involved in late-stage 70S ribosome quality control and in maturation of the 3' terminus of the 16S rRNA. The sequence is that of Endoribonuclease YbeY from Glaesserella parasuis serovar 5 (strain SH0165) (Haemophilus parasuis).